We begin with the raw amino-acid sequence, 283 residues long: Nucleoid occlusion protein (283 aa).

The interval Met1–Ala21 is disordered. The segment at residues Glu148 to Leu167 is a DNA-binding region (H-T-H motif).

The protein belongs to the ParB family.

It localises to the cytoplasm. The protein resides in the nucleoid. Effects nucleoid occlusion by binding relatively nonspecifically to DNA and preventing the assembly of the division machinery in the vicinity of the nucleoid, especially under conditions that disturb the cell cycle. It helps to coordinate cell division and chromosome segregation by preventing the formation of the Z ring through the nucleoid, which would cause chromosome breakage. The protein is Nucleoid occlusion protein of Bacillus velezensis (strain DSM 23117 / BGSC 10A6 / LMG 26770 / FZB42) (Bacillus amyloliquefaciens subsp. plantarum).